Reading from the N-terminus, the 145-residue chain is MDINEILQYLPHRYPFLLVDRVLEIEEGKRILALKNVTMNEPFFPGHFPHHPVMPGVLIVEAMAQAAALLSFKSMGVKPDENSVVYFAGIDNVRFKRPVVPGDQLLFDVVITQSKRNIYKYKGVARVDGELATEAELTCALKTLS.

Histidine 47 is an active-site residue.

The protein belongs to the thioester dehydratase family. FabZ subfamily.

The protein resides in the cytoplasm. The catalysed reaction is a (3R)-hydroxyacyl-[ACP] = a (2E)-enoyl-[ACP] + H2O. Involved in unsaturated fatty acids biosynthesis. Catalyzes the dehydration of short chain beta-hydroxyacyl-ACPs and long chain saturated and unsaturated beta-hydroxyacyl-ACPs. This chain is 3-hydroxyacyl-[acyl-carrier-protein] dehydratase FabZ, found in Aromatoleum aromaticum (strain DSM 19018 / LMG 30748 / EbN1) (Azoarcus sp. (strain EbN1)).